The primary structure comprises 319 residues: Pyrroline-5-carboxylate reductase 1, mitochondrial (319 aa).

An N-acetylserine modification is found at Ser-2. NADP(+) contacts are provided by residues 6–11 (IGAGQL) and Ser-34. NADPH is bound by residues Ala-8, Gln-10, Leu-11, Ser-34, Asp-36, Asn-56, Val-70, Lys-71, and Ala-97. NADP(+) contacts are provided by residues Asn-56, 69–72 (AVKP), and 95–97 (CAA). Residue Glu-164 participates in L-proline binding. Asn-230 contributes to the NADPH binding site. Ala-237 and Thr-238 together coordinate L-proline. Phosphoserine occurs at positions 278 and 301. The interval 294 to 319 (SPAGTALSPSGHTKLLPRSLAPAGKD) is disordered.

The protein belongs to the pyrroline-5-carboxylate reductase family. As to quaternary structure, homodecamer; composed of 5 homodimers. Interacts with LTO1.

It is found in the mitochondrion. It catalyses the reaction L-proline + NADP(+) = (S)-1-pyrroline-5-carboxylate + NADPH + 2 H(+). The enzyme catalyses L-proline + NAD(+) = (S)-1-pyrroline-5-carboxylate + NADH + 2 H(+). It participates in amino-acid biosynthesis; L-proline biosynthesis; L-proline from L-glutamate 5-semialdehyde: step 1/1. Subject to competitive inhibition by the reaction product proline. Subject to competitive inhibition by stearoyl coenzyme A. In terms of biological role, oxidoreductase that catalyzes the last step in proline biosynthesis, which corresponds to the reduction of pyrroline-5-carboxylate to L-proline using NAD(P)H. At physiologic concentrations, has higher specific activity in the presence of NADH. Involved in the cellular response to oxidative stress. In Homo sapiens (Human), this protein is Pyrroline-5-carboxylate reductase 1, mitochondrial.